The chain runs to 132 residues: Small ribosomal subunit protein uS11 (132 aa).

The protein belongs to the universal ribosomal protein uS11 family. In terms of assembly, part of the 30S ribosomal subunit. Interacts with proteins S7 and S18. Binds to IF-3.

Functionally, located on the platform of the 30S subunit, it bridges several disparate RNA helices of the 16S rRNA. Forms part of the Shine-Dalgarno cleft in the 70S ribosome. This chain is Small ribosomal subunit protein uS11, found in Chlamydia caviae (strain ATCC VR-813 / DSM 19441 / 03DC25 / GPIC) (Chlamydophila caviae).